Here is a 212-residue protein sequence, read N- to C-terminus: uncharacterized protein (212 aa).

2 disordered regions span residues 1–148 (MEKD…LNDL) and 168–190 (EVVT…LSED). Positions 61-70 (KELESEDQGK) are enriched in basic and acidic residues. Residues 71 to 85 (DPSSNAEDASCQKNL) show a composition bias toward polar residues. 3 stretches are compositionally biased toward basic and acidic residues: residues 99-115 (LGHE…KSDL), 124-144 (EGEH…ESIK), and 168-180 (EVVT…EKPS).

This is an uncharacterized protein from Homo sapiens (Human).